Reading from the N-terminus, the 313-residue chain is Olfactory receptor 1J4 (313 aa).

The Extracellular portion of the chain corresponds to 1 to 25 (MKRENQSSVSEFLLLDLPIWPEQQA). N-linked (GlcNAc...) asparagine glycosylation occurs at asparagine 5. The helical transmembrane segment at 26 to 49 (VFFTLFLGMYLITVLGNLLIILLI) threads the bilayer. At 50–57 (RLDSHLHT) the chain is on the cytoplasmic side. The chain crosses the membrane as a helical span at residues 58 to 79 (PMFFFLSHLALTDISLSSVTVP). Residues 80-100 (KMLLSMQTQDQSILYAGCVTQ) are Extracellular-facing. The cysteines at positions 97 and 189 are disulfide-linked. The chain crosses the membrane as a helical span at residues 101–120 (MYFFIFFTDLDNFLLTSMAY). The Cytoplasmic segment spans residues 121-139 (DRYVAICHPLRYTTIMKEG). Residues 140-158 (LCNLLVTVSWILSCTNALS) form a helical membrane-spanning segment. Residues 159 to 195 (HTLLLAQLSFCADNTIPHFFCDLVALLKLSCSDISLN) are Extracellular-facing. The helical transmembrane segment at 196 to 219 (ELVIFTVGQAVITLPLICILISYG) threads the bilayer. Topologically, residues 220-236 (HIGVTILKAPSTKGIFK) are cytoplasmic. Residues 237-259 (ALSTCGSHLSVVSLYYGTIIGLY) form a helical membrane-spanning segment. The Extracellular segment spans residues 260-272 (FLPSSSASSDKDV). A helical transmembrane segment spans residues 273-292 (IASVMYTVITPLLNPFIYSL). The Cytoplasmic segment spans residues 293–313 (RNRDIKGALERLFNRATVLSQ).

Belongs to the G-protein coupled receptor 1 family.

The protein localises to the cell membrane. Its function is as follows. Odorant receptor. The protein is Olfactory receptor 1J4 (OR1J4) of Homo sapiens (Human).